The sequence spans 43 residues: MTWINHNTVKIGNQTLHLDTDETYDWRKDDHWIREEPPQASVR.

This is an uncharacterized protein from Bacillus subtilis (strain 168).